The sequence spans 80 residues: Putative membrane protein insertion efficiency factor (80 aa).

It belongs to the UPF0161 family.

It localises to the cell membrane. Could be involved in insertion of integral membrane proteins into the membrane. The polypeptide is Putative membrane protein insertion efficiency factor (Shouchella clausii (strain KSM-K16) (Alkalihalobacillus clausii)).